The primary structure comprises 103 residues: Large ribosomal subunit protein bL21 (103 aa).

Belongs to the bacterial ribosomal protein bL21 family. As to quaternary structure, part of the 50S ribosomal subunit. Contacts protein L20.

In terms of biological role, this protein binds to 23S rRNA in the presence of protein L20. The chain is Large ribosomal subunit protein bL21 from Ectopseudomonas mendocina (strain ymp) (Pseudomonas mendocina).